Consider the following 196-residue polypeptide: Imidazole glycerol phosphate synthase subunit HisH (196 aa).

The Glutamine amidotransferase type-1 domain occupies 2–196; the sequence is NVVILDTGCA…AKLLKNFLEM (195 aa). Catalysis depends on C77, which acts as the Nucleophile. Residues H178 and E180 contribute to the active site.

Heterodimer of HisH and HisF.

Its subcellular location is the cytoplasm. It catalyses the reaction 5-[(5-phospho-1-deoxy-D-ribulos-1-ylimino)methylamino]-1-(5-phospho-beta-D-ribosyl)imidazole-4-carboxamide + L-glutamine = D-erythro-1-(imidazol-4-yl)glycerol 3-phosphate + 5-amino-1-(5-phospho-beta-D-ribosyl)imidazole-4-carboxamide + L-glutamate + H(+). The enzyme catalyses L-glutamine + H2O = L-glutamate + NH4(+). It functions in the pathway amino-acid biosynthesis; L-histidine biosynthesis; L-histidine from 5-phospho-alpha-D-ribose 1-diphosphate: step 5/9. Its function is as follows. IGPS catalyzes the conversion of PRFAR and glutamine to IGP, AICAR and glutamate. The HisH subunit catalyzes the hydrolysis of glutamine to glutamate and ammonia as part of the synthesis of IGP and AICAR. The resulting ammonia molecule is channeled to the active site of HisF. This Shigella flexneri protein is Imidazole glycerol phosphate synthase subunit HisH.